We begin with the raw amino-acid sequence, 356 residues long: 3-dehydroquinate synthase (356 aa).

Residues 101-105, 125-126, Lys138, and Lys147 contribute to the NAD(+) site; these read GVIGD and TT. Residues Glu180, His243, and His260 each contribute to the Zn(2+) site.

It belongs to the sugar phosphate cyclases superfamily. Dehydroquinate synthase family. Co(2+) is required as a cofactor. It depends on Zn(2+) as a cofactor. Requires NAD(+) as cofactor.

It localises to the cytoplasm. The enzyme catalyses 7-phospho-2-dehydro-3-deoxy-D-arabino-heptonate = 3-dehydroquinate + phosphate. Its pathway is metabolic intermediate biosynthesis; chorismate biosynthesis; chorismate from D-erythrose 4-phosphate and phosphoenolpyruvate: step 2/7. Functionally, catalyzes the conversion of 3-deoxy-D-arabino-heptulosonate 7-phosphate (DAHP) to dehydroquinate (DHQ). This Alkaliphilus metalliredigens (strain QYMF) protein is 3-dehydroquinate synthase.